Consider the following 505-residue polypeptide: Deoxyguanosinetriphosphate triphosphohydrolase (505 aa).

One can recognise an HD domain in the interval 66-273; the sequence is RLTHSMEVQQ…MEAADDISYC (208 aa).

Belongs to the dGTPase family. Type 1 subfamily. As to quaternary structure, homotetramer. The cofactor is Mg(2+).

It carries out the reaction dGTP + H2O = 2'-deoxyguanosine + triphosphate + H(+). Its function is as follows. dGTPase preferentially hydrolyzes dGTP over the other canonical NTPs. The polypeptide is Deoxyguanosinetriphosphate triphosphohydrolase (Escherichia coli (strain K12 / MC4100 / BW2952)).